A 72-amino-acid chain; its full sequence is Antitoxin VapB11 (72 aa).

Antitoxin component of a type II toxin-antitoxin (TA) system. In Mycobacterium tuberculosis (strain CDC 1551 / Oshkosh), this protein is Antitoxin VapB11 (vapB11).